Consider the following 318-residue polypeptide: Bis(5'-nucleosyl)-tetraphosphatase, symmetrical (318 aa).

The segment at 269–318 (PGREVTGPAPVARAPRRPRERQGRQRSRGNRGNAGNAAAGPKPSVDTPQD) is disordered. The segment covering 282–297 (APRRPRERQGRQRSRG) has biased composition (basic residues). Low complexity predominate over residues 298-311 (NRGNAGNAAAGPKP).

This sequence belongs to the Ap4A hydrolase family.

The enzyme catalyses P(1),P(4)-bis(5'-adenosyl) tetraphosphate + H2O = 2 ADP + 2 H(+). In terms of biological role, hydrolyzes diadenosine 5',5'''-P1,P4-tetraphosphate to yield ADP. In Xanthomonas euvesicatoria pv. vesicatoria (strain 85-10) (Xanthomonas campestris pv. vesicatoria), this protein is Bis(5'-nucleosyl)-tetraphosphatase, symmetrical.